A 216-amino-acid chain; its full sequence is Peptide methionine sulfoxide reductase MsrA (216 aa).

Residue Cys54 is part of the active site.

This sequence belongs to the MsrA Met sulfoxide reductase family.

The catalysed reaction is L-methionyl-[protein] + [thioredoxin]-disulfide + H2O = L-methionyl-(S)-S-oxide-[protein] + [thioredoxin]-dithiol. It catalyses the reaction [thioredoxin]-disulfide + L-methionine + H2O = L-methionine (S)-S-oxide + [thioredoxin]-dithiol. Its function is as follows. Has an important function as a repair enzyme for proteins that have been inactivated by oxidation. Catalyzes the reversible oxidation-reduction of methionine sulfoxide in proteins to methionine. This is Peptide methionine sulfoxide reductase MsrA from Xanthomonas euvesicatoria pv. vesicatoria (strain 85-10) (Xanthomonas campestris pv. vesicatoria).